Consider the following 434-residue polypeptide: Transcription factor AP-2-epsilon (434 aa).

A disordered region spans residues 30–123 (LNQGPYSSAP…GLSLDPRRDY (94 aa)). Residues 52–62 (PYFPPPYPQPP) show a composition bias toward pro residues. The short motif at 53–58 (YFPPPY) is the PPxY motif element. The span at 81-97 (SSINSIHHQHQQPSWHT) shows a compositional bias: polar residues. The H-S-H (helix-span-helix), dimerization stretch occupies residues 278–408 (RRKAANVTLL…YLLESLKGMD (131 aa)). The disordered stretch occupies residues 415-434 (TGNGHSAAESKSEKDIKHRK). The segment covering 422–434 (AESKSEKDIKHRK) has biased composition (basic and acidic residues).

This sequence belongs to the AP-2 family. Binds DNA as a dimer. Can form homodimers or heterodimers with other AP-2 family members.

The protein localises to the nucleus. Functionally, sequence-specific DNA-binding protein that interacts with inducible viral and cellular enhancer elements to regulate transcription of selected genes. AP-2 factors bind to the consensus sequence 5'-GCCNNNGGC-3' and activate genes involved in a large spectrum of important biological functions. In Xenopus laevis (African clawed frog), this protein is Transcription factor AP-2-epsilon.